The chain runs to 564 residues: Zyxin (564 aa).

A2 is subject to N-acetylalanine. The disordered stretch occupies residues 30-141; that stretch reads VAPKPKVNPF…TQLPPQPREK (112 aa). Composition is skewed to pro residues over residues 63-78 and 93-109; these read IPPPPPEDFPLPPPPL and FPPPPPPMIEEPFPPAP. 4 positions are modified to phosphoserine: S117, S144, S170, and S171. Residues 162–344 are disordered; sequence NDPFKARVSS…RSPGGPGPLT (183 aa). Pro residues-rich tracts occupy residues 174 to 189 and 197 to 214; these read VPPPVATPFVPKPSTK and PLPPWKTPSSSQPPPQPQ. A Phosphothreonine modification is found at T180. A compositionally biased stretch (polar residues) spans 234 to 243; it reads QPVSSANTQP. R244 is subject to Asymmetric dimethylarginine. Residues 255-275 are compositionally biased toward low complexity; the sequence is PKFAPVAPKFTPVVSKFSPGA. K256 and K263 each carry N6-acetyllysine. A Phosphothreonine modification is found at T265. An N6-acetyllysine modification is found at K270. Phosphoserine is present on residues S272 and S300. Residues 294 to 310 show a composition bias toward polar residues; it reads SSVSTGSPQPPSFTYAQ. Over residues 311–322 the composition is skewed to basic and acidic residues; it reads QKEKPLVQEKQH. At S336 the chain carries Phosphoserine. LIM zinc-binding domains are found at residues 376–435, 436–495, and 496–562; these read CGKC…TLEK, CNTC…YAPR, and CSVC…SARA.

Belongs to the zyxin/ajuba family. Interacts, via the Pro-rich regions, with the EVH1 domains of ENAH, EVL and VASP. Interacts with the first LIM domain of TES. Interacts with SYNPO2.

It localises to the cytoplasm. Its subcellular location is the cytoskeleton. It is found in the cell junction. The protein localises to the focal adhesion. The protein resides in the nucleus. In terms of biological role, adhesion plaque protein. Binds alpha-actinin and the CRP protein. Important for targeting TES and ENA/VASP family members to focal adhesions and for the formation of actin-rich structures. May be a component of a signal transduction pathway that mediates adhesion-stimulated changes in gene expression. The chain is Zyxin (Zyx) from Mus musculus (Mouse).